A 232-amino-acid polypeptide reads, in one-letter code: Vacuolar iron transporter homolog 1 (232 aa).

The Cytoplasmic segment spans residues 1–59; that stretch reads MAIDLGCHVGCASPETKQEETADPTAAPVVVDDVEAAAGGRRPGDGGGVNYVARAQWLR. The helical transmembrane segment at 60 to 80 threads the bilayer; it reads AAVLGANDGLVSVASLMVGVG. The Vacuolar segment spans residues 81–89; sequence AANGTRRAM. A helical transmembrane segment spans residues 90 to 110; that stretch reads LVSGLAGLVAGACSMAIGEFV. Residues 111–148 are Cytoplasmic-facing; that stretch reads SVYAQCDIQAAQIERARGGKDADGGEEEEELPSPTMAA. The chain crosses the membrane as a helical span at residues 149–169; that stretch reads VASALSFAAGAALPLLAGGFV. Residues 170 to 175 lie on the Vacuolar side of the membrane; it reads RPWAAR. A helical membrane pass occupies residues 176–196; sequence VAAVCAASSLGLAGFGVASAY. Residues 197-208 lie on the Cytoplasmic side of the membrane; the sequence is LGGAGVARSGVR. The chain crosses the membrane as a helical span at residues 209-229; that stretch reads MLVGGWLAMAVTYGVLKLFGM. The Vacuolar segment spans residues 230-232; it reads HGV.

Belongs to the CCC1 family.

The protein localises to the vacuole membrane. The enzyme catalyses Fe(2+)(in) = Fe(2+)(out). In terms of biological role, probable vacuolar iron transporter that may be involved in the regulation of iron distribution throughout the plant. In Oryza sativa subsp. japonica (Rice), this protein is Vacuolar iron transporter homolog 1.